A 236-amino-acid polypeptide reads, in one-letter code: 2,3,4,5-tetrahydropyridine-2,6-dicarboxylate N-acetyltransferase (236 aa).

It belongs to the transferase hexapeptide repeat family. DapH subfamily.

The enzyme catalyses (S)-2,3,4,5-tetrahydrodipicolinate + acetyl-CoA + H2O = L-2-acetamido-6-oxoheptanedioate + CoA. It functions in the pathway amino-acid biosynthesis; L-lysine biosynthesis via DAP pathway; LL-2,6-diaminopimelate from (S)-tetrahydrodipicolinate (acetylase route): step 1/3. Functionally, catalyzes the transfer of an acetyl group from acetyl-CoA to tetrahydrodipicolinate. The protein is 2,3,4,5-tetrahydropyridine-2,6-dicarboxylate N-acetyltransferase of Listeria ivanovii.